Consider the following 593-residue polypeptide: Kelch-like protein 2 (593 aa).

Positions 1-29 (METPPLPPACTKQGHQKPLDSKDENPEKH) are disordered. Residues 17–29 (KPLDSKDENPEKH) show a composition bias toward basic and acidic residues. Positions 56 to 123 (CDVTIVAEDM…VYTAEIQVTE (68 aa)) constitute a BTB domain. Kelch repeat units lie at residues 308-353 (LMVV…YMAG), 354-400 (LVFA…VLNG), 402-447 (LYAV…VVGG), 449-496 (LYAV…VLNN), 497-543 (LLYA…AVNG), and 545-591 (LYVV…VIDK).

As to quaternary structure, component of the BCR(KLHL2) E3 ubiquitin ligase complex, at least composed of CUL3 and KLHL2 and RBX1. Binds actin. Interacts with KLHL12. Interacts (via N-terminus) with FYN (via SH3 domain).

The protein resides in the cytoplasm. The protein localises to the cytoskeleton. Its subcellular location is the cell projection. It is found in the ruffle. It localises to the lamellipodium. The protein resides in the cytosol. It functions in the pathway protein modification; protein ubiquitination. Substrate-specific adapter of a BCR (BTB-CUL3-RBX1) E3 ubiquitin ligase complex that mediates the ubiquitination of target proteins, such as NPTXR, WNK1, WNK3 and WNK4, leading most often to their proteasomal degradation. The BCR(KLHL2) complex catalyzes ubiquitination and degradation of NPTXR. Responsible for degradative ubiquitination of the WNK kinases WNK1, WNK3 and WNK4. Plays a role in the reorganization of the actin cytoskeleton. Promotes growth of cell projections in oligodendrocyte precursors. This chain is Kelch-like protein 2, found in Mus musculus (Mouse).